The sequence spans 376 residues: Putative phosphoserine aminotransferase (376 aa).

Arg-50 is an L-glutamate binding site. Pyridoxal 5'-phosphate contacts are provided by residues 84–85 (AT), Phe-108, Thr-154, Asp-176, and Gln-199. Lys-200 carries the N6-(pyridoxal phosphate)lysine modification. 251-252 (NT) is a binding site for pyridoxal 5'-phosphate.

The protein belongs to the class-V pyridoxal-phosphate-dependent aminotransferase family. SerC subfamily. Homodimer. Pyridoxal 5'-phosphate is required as a cofactor.

Its subcellular location is the cytoplasm. The catalysed reaction is O-phospho-L-serine + 2-oxoglutarate = 3-phosphooxypyruvate + L-glutamate. It carries out the reaction 4-(phosphooxy)-L-threonine + 2-oxoglutarate = (R)-3-hydroxy-2-oxo-4-phosphooxybutanoate + L-glutamate. It functions in the pathway amino-acid biosynthesis; L-serine biosynthesis; L-serine from 3-phospho-D-glycerate: step 2/3. Its pathway is cofactor biosynthesis; pyridoxine 5'-phosphate biosynthesis; pyridoxine 5'-phosphate from D-erythrose 4-phosphate: step 3/5. Catalyzes the reversible conversion of 3-phosphohydroxypyruvate to phosphoserine and of 3-hydroxy-2-oxo-4-phosphonooxybutanoate to phosphohydroxythreonine. The chain is Putative phosphoserine aminotransferase from Mycobacterium bovis (strain ATCC BAA-935 / AF2122/97).